Consider the following 92-residue polypeptide: DNA-directed RNA polymerase subunit omega (92 aa).

This sequence belongs to the RNA polymerase subunit omega family. As to quaternary structure, the RNAP catalytic core consists of 2 alpha, 1 beta, 1 beta' and 1 omega subunit. When a sigma factor is associated with the core the holoenzyme is formed, which can initiate transcription.

It carries out the reaction RNA(n) + a ribonucleoside 5'-triphosphate = RNA(n+1) + diphosphate. Functionally, promotes RNA polymerase assembly. Latches the N- and C-terminal regions of the beta' subunit thereby facilitating its interaction with the beta and alpha subunits. The chain is DNA-directed RNA polymerase subunit omega from Shewanella frigidimarina (strain NCIMB 400).